A 313-amino-acid chain; its full sequence is MKGQTGLRSLALLYISPLYILERLPLKLSAPDTLVVRGSFIVPTEPLYPSITMVQTNLEVVDDTLHLPRILCLHGGGSNAAIFQAQCRRLIAQLRSEFRFVFAQAPFLSDAEPNVMSVYSQWGPFRRWLRWCPDHPEIRPEDAIRAIDDCLEDVKRQDDAKGATGAWVGLLGFSQGAKMCASLLYRQQIRQELRGRSFAGSDYRFGVLLAGRAPLVSLDPDLDLNSSLPDVSQITDAKYHGPSQDVLRIPTVHVHGMRDPHVDLHRQLFEEFCAPESRRLVEWDGDHRVPLKYNDVSLVAYQIRELATQTGAP.

Residues serine 174, aspartate 259, and histidine 287 each act as charge relay system in the active site.

The protein belongs to the LovG family.

It participates in mycotoxin biosynthesis. Functionally, esterase; part of the gene cluster that mediates the biosynthesis of the mycotoxin citrinin, a hepato-nephrotoxic compound to humans due to inhibition of respiration complex III. The pathway begins with the synthesis of a keto-aldehyde intermediate by the citrinin PKS (pksCT) from successive condensations of 4 malonyl-CoA units, presumably with a simple acetyl-CoA starter unit. Release of the keto-aldehyde intermediate is consistent with the presence of the C-terminal reductive release domain. Mp11 collaborates with pksCT by catalyzing the hydrolysis of ACP-bound acyl intermediates to free the ACP from stalled intermediates. Mpl2 then catalyzes the oxidation of the C-12 methyl of the ketone intermediate to an alcohol intermediate which is further oxidized by the oxidoreductase mpl7 to produce a bisaldehyde intermediate. The fourth catalytic step is catalyzed by the mpl4 aldehyde dehydrogenase. The final transformation is the reduction of C-3 by mpl6 to provide the chemically stable citrinin nucleus. The polypeptide is Esterase mpl1 (Monascus purpureus (Red mold)).